The sequence spans 417 residues: NADH-quinone oxidoreductase subunit D (417 aa).

This sequence belongs to the complex I 49 kDa subunit family. As to quaternary structure, NDH-1 is composed of 14 different subunits. Subunits NuoB, C, D, E, F, and G constitute the peripheral sector of the complex.

Its subcellular location is the cell inner membrane. It catalyses the reaction a quinone + NADH + 5 H(+)(in) = a quinol + NAD(+) + 4 H(+)(out). Functionally, NDH-1 shuttles electrons from NADH, via FMN and iron-sulfur (Fe-S) centers, to quinones in the respiratory chain. The immediate electron acceptor for the enzyme in this species is believed to be ubiquinone. Couples the redox reaction to proton translocation (for every two electrons transferred, four hydrogen ions are translocated across the cytoplasmic membrane), and thus conserves the redox energy in a proton gradient. The polypeptide is NADH-quinone oxidoreductase subunit D (Polaromonas sp. (strain JS666 / ATCC BAA-500)).